A 165-amino-acid chain; its full sequence is Transcriptional repressor NrdR (165 aa).

A zinc finger spans residues 3-34; it reads CPFCSANDTKVIDSRLVSDGHQVRRRRECLAC. The ATP-cone domain occupies 49–139; sequence PRIIKRDGSR…VYLSFEDISE (91 aa).

Belongs to the NrdR family. Zn(2+) is required as a cofactor.

Functionally, negatively regulates transcription of bacterial ribonucleotide reductase nrd genes and operons by binding to NrdR-boxes. In Colwellia psychrerythraea (strain 34H / ATCC BAA-681) (Vibrio psychroerythus), this protein is Transcriptional repressor NrdR.